The following is a 569-amino-acid chain: AsmA family protein YicH (569 aa).

The Cytoplasmic segment spans residues Met-1–Lys-6. Residues Leu-7–Gln-27 traverse the membrane as a helical segment. Topologically, residues Thr-28–Arg-569 are periplasmic.

The protein belongs to the AsmA family.

The protein resides in the cell inner membrane. This Escherichia coli (strain K12) protein is AsmA family protein YicH (yicH).